A 107-amino-acid chain; its full sequence is Small ribosomal subunit protein uS17 (107 aa).

Belongs to the universal ribosomal protein uS17 family. Part of the 30S ribosomal subunit.

One of the primary rRNA binding proteins, it binds specifically to the 5'-end of 16S ribosomal RNA. In Thermotoga maritima (strain ATCC 43589 / DSM 3109 / JCM 10099 / NBRC 100826 / MSB8), this protein is Small ribosomal subunit protein uS17.